We begin with the raw amino-acid sequence, 365 residues long: MDVIGRKKVLVAMSGGVDSSVTAALLLEQGYEVVGVTMQIWDPKIEVIGEEYVGCCSIYAVNDARRVADRLGIPYYVLNFRELFERKVIDYFTEEYLRGRTPNPCIACNRYIKFDALLKKALSLGMDYMATGHYARVVYKDDIGKYGLFRGVDRKKDQTYVLYNLTQDMLRRLLLPLGEYTKEQVRELARKYNLVTADKPESQEICFVPDNDYRKFLKERRGEEIKPGNFVDVNGRVLGQHQGYPYYTIGQRKGLGLALGKPYYVVDIRPETNEVVIGEASEIFSPGLIASDLNFLWFDEIPERFEAQAQIRYNAKPQPAVVERIGKDKVKVVFNEPQRAITPGQAVVFYRGDELLGGGTIEKRL.

Residues 12-19 and Met-38 contribute to the ATP site; that span reads AMSGGVDS. Cys-108 acts as the Nucleophile in catalysis. A disulfide bridge links Cys-108 with Cys-206. Position 132 (Gly-132) interacts with ATP. The interaction with tRNA stretch occupies residues 156-158; sequence KDQ. Catalysis depends on Cys-206, which acts as the Cysteine persulfide intermediate. An interaction with tRNA region spans residues 312–313; that stretch reads RY.

Belongs to the MnmA/TRMU family.

It localises to the cytoplasm. The catalysed reaction is S-sulfanyl-L-cysteinyl-[protein] + uridine(34) in tRNA + AH2 + ATP = 2-thiouridine(34) in tRNA + L-cysteinyl-[protein] + A + AMP + diphosphate + H(+). Functionally, catalyzes the 2-thiolation of uridine at the wobble position (U34) of tRNA, leading to the formation of s(2)U34. The polypeptide is tRNA-specific 2-thiouridylase MnmA (Carboxydothermus hydrogenoformans (strain ATCC BAA-161 / DSM 6008 / Z-2901)).